Reading from the N-terminus, the 433-residue chain is Enolase (433 aa).

Residue Q163 coordinates (2R)-2-phosphoglycerate. The Proton donor role is filled by E205. Mg(2+) contacts are provided by D242, E286, and D313. (2R)-2-phosphoglycerate-binding residues include K338, R367, S368, and K389. Residue K338 is the Proton acceptor of the active site.

The protein belongs to the enolase family. Mg(2+) is required as a cofactor.

It localises to the cytoplasm. The protein resides in the secreted. It is found in the cell surface. The catalysed reaction is (2R)-2-phosphoglycerate = phosphoenolpyruvate + H2O. Its pathway is carbohydrate degradation; glycolysis; pyruvate from D-glyceraldehyde 3-phosphate: step 4/5. In terms of biological role, catalyzes the reversible conversion of 2-phosphoglycerate (2-PG) into phosphoenolpyruvate (PEP). It is essential for the degradation of carbohydrates via glycolysis. The chain is Enolase from Koribacter versatilis (strain Ellin345).